Here is a 379-residue protein sequence, read N- to C-terminus: MSVDVKSAQSSKSDSLQVEPRPGERDKALNLVLGQIERNFGKGSIMRLGDASRMRVETFPTGALTLDLALGGGYPKGRVVEVYGPESSGKTTLTLHAIAEVQRRGGVAAFVDAEHALDPVYAASLGVDIENLLVSQPDTGEMALEIVDQLVRSAAVDIVVVDSVAALTPRSEIEGEMGDLAVGSQARLMSQAMRKITGNIGKSGCTVIFLNQLRLKIGVTYGNPETTTGGNALKFYASVRLDIRRIQTLKRGTEEYGIRAKVKVAKNKVAPPFRIAEFDILFGRGISTLGCLLDLAEETGVVIRKGAWYSYEGDNIGQGRDNTITWLEQNSEAQEQIEVLVRQKLTEGSEVTANSMRPLAAAARTAAKKPAVSLASEAA.

A disordered region spans residues 1-23 (MSVDVKSAQSSKSDSLQVEPRPG). Residues 7–16 (SAQSSKSDSL) are compositionally biased toward polar residues. An ATP-binding site is contributed by 84 to 91 (GPESSGKT).

This sequence belongs to the RecA family.

The protein resides in the cytoplasm. Can catalyze the hydrolysis of ATP in the presence of single-stranded DNA, the ATP-dependent uptake of single-stranded DNA by duplex DNA, and the ATP-dependent hybridization of homologous single-stranded DNAs. It interacts with LexA causing its activation and leading to its autocatalytic cleavage. This Prochlorococcus marinus (strain MIT 9313) protein is Protein RecA.